The primary structure comprises 331 residues: uncharacterized protein (331 aa).

Pentapeptide repeat domains lie at Glu-50–His-89, Cys-90–Gly-129, Ala-140–Glu-179, Ala-185–Gly-224, and Thr-230–Gln-269.

This is an uncharacterized protein from Synechocystis sp. (strain ATCC 27184 / PCC 6803 / Kazusa).